A 942-amino-acid chain; its full sequence is Diacylglycerol kinase theta (942 aa).

A disordered region spans residues Met1–Pro59. Residues Ser22 and Ser26 each carry the phosphoserine modification. Residues Pro45–Pro59 show a composition bias toward low complexity. 3 Phorbol-ester/DAG-type zinc fingers span residues Gly60 to Cys108, Ala121 to Cys168, and His183 to Cys234. A disordered region spans residues Glu269–Ser295. One can recognise a Ras-associating domain in the interval Ala395–Asp494. Short sequence motifs (LXXLL motif) lie at residues Leu555–Leu559 and Leu574–Leu578. Positions Pro584 to Ala721 constitute a DAGKc domain. The tract at residues Pro908–Arg942 is disordered. The span at His911–Gly924 shows a compositional bias: basic residues. Over residues Asp932–Arg942 the composition is skewed to low complexity.

The protein belongs to the eukaryotic diacylglycerol kinase family. Interacts with RHOA (constitutively activated, GTP-bound); the interaction inhibits DGKQ. Interacts with PRKCE. Interacts with PRKCH. Interacts with PLCB1. Interacts with NR5A1; the interaction requires both LXXLL motifs in DGKQ and is required for full phosphatidic acid-mediated activation of NR5A1. Phosphorylated by PRKCE and PRKCH in vitro.

The protein localises to the cytoplasm. The protein resides in the cytosol. Its subcellular location is the cell membrane. It localises to the synapse. It is found in the cytoskeleton. The protein localises to the nucleus. The protein resides in the nucleus speckle. Its subcellular location is the nucleus matrix. The catalysed reaction is a 1,2-diacyl-sn-glycerol + ATP = a 1,2-diacyl-sn-glycero-3-phosphate + ADP + H(+). The enzyme catalyses a 1-O-alkyl-sn-glycerol + ATP = a 1-O-alkyl-sn-glycero-3-phosphate + ADP + H(+). It carries out the reaction 1-O-alkyl-2-acyl-sn-glycerol + ATP = 1-O-alkyl-2-acyl-sn-glycero-3-phosphate + ADP + H(+). It catalyses the reaction 1,2-di-(9Z-octadecenoyl)-sn-glycerol + ATP = 1,2-di-(9Z-octadecenoyl)-sn-glycero-3-phosphate + ADP + H(+). The catalysed reaction is 1-O-hexadecyl-sn-glycerol + ATP = 1-O-hexadecyl-sn-glycero-3-phosphate + ADP + H(+). The enzyme catalyses 1-O-hexadecyl-2-acetyl-sn-glycerol + ATP = 1-O-hexadecyl-2-acetyl-sn-glycero-3-phosphate + ADP + H(+). It carries out the reaction 1-octadecanoyl-2-(5Z,8Z,11Z,14Z-eicosatetraenoyl)-sn-glycerol + ATP = 1-octadecanoyl-2-(5Z,8Z,11Z,14Z-eicosatetraenoyl)-sn-glycero-3-phosphate + ADP + H(+). Its pathway is lipid metabolism; glycerolipid metabolism. With respect to regulation, activated by phosphatidylserine. In terms of biological role, diacylglycerol kinase that converts diacylglycerol/DAG into phosphatidic acid/phosphatidate/PA and regulates the respective levels of these two bioactive lipids. Thereby, acts as a central switch between the signaling pathways activated by these second messengers with different cellular targets and opposite effects in numerous biological processes. Within the adrenocorticotropic hormone signaling pathway, produces phosphatidic acid which in turn activates NR5A1 and subsequent steroidogenic gene transcription. Also functions downstream of the nerve growth factor signaling pathway being specifically activated in the nucleus by the growth factor. Through its diacylglycerol activity also regulates synaptic vesicle endocytosis. This is Diacylglycerol kinase theta from Homo sapiens (Human).